The primary structure comprises 247 residues: MSDPLILIPARLAATRLPDKPLAEICGEPMIVHVWRRAIESGLGPVVVCTDTPAIVAAVEAVGGLGVLTRPDHPSGSDRLAEALAIIDPEGRHDVVVNVQGDLPTIDPAVIAASVTPLADRAVDIATLCAVITRPEERTEPSVVKVVGSPVSPTRLRALYFTRATAPWGEGPLHHHIGLYAYRRRALERFVALGPSPLEQREKLEQLRALEAGMRIDATIVDDVPLGVDTPHDLDRARAVMAARRLN.

The protein belongs to the KdsB family.

The protein resides in the cytoplasm. It catalyses the reaction 3-deoxy-alpha-D-manno-oct-2-ulosonate + CTP = CMP-3-deoxy-beta-D-manno-octulosonate + diphosphate. Its pathway is nucleotide-sugar biosynthesis; CMP-3-deoxy-D-manno-octulosonate biosynthesis; CMP-3-deoxy-D-manno-octulosonate from 3-deoxy-D-manno-octulosonate and CTP: step 1/1. It participates in bacterial outer membrane biogenesis; lipopolysaccharide biosynthesis. Functionally, activates KDO (a required 8-carbon sugar) for incorporation into bacterial lipopolysaccharide in Gram-negative bacteria. The polypeptide is 3-deoxy-manno-octulosonate cytidylyltransferase (Methylobacterium sp. (strain 4-46)).